The primary structure comprises 317 residues: MTEPLRIVFAGTPEFAAEHLKALLTSPHDVVAVYTQPDRPAGRGQKLMPSPVKQLALEHNIPVLQPPTLRNAEAQAELAALNPDLLVVVAYGLILPQAVLDIPRLGCINSHASLLPRWRGAAPIQRAVEAGDSESGVTVMRMEAGLDTGPMLLKVTTPITAADTGGSLHDRLAELGPPAVIQAIAGLAAGTLEGEVQDDSLATYAHKLNKDEARIDWSRPAVELERLVRAFNPWPICHSTLNGEALKVLAATLAEGAGAPGEIIGASKDGLLVACGEQALCLTRLQLPGGKALNFSDLFNSRREKFALGTVLGVVAQ.

(6S)-5,6,7,8-tetrahydrofolate is bound at residue 113–116 (SLLP).

Belongs to the Fmt family.

It catalyses the reaction L-methionyl-tRNA(fMet) + (6R)-10-formyltetrahydrofolate = N-formyl-L-methionyl-tRNA(fMet) + (6S)-5,6,7,8-tetrahydrofolate + H(+). In terms of biological role, attaches a formyl group to the free amino group of methionyl-tRNA(fMet). The formyl group appears to play a dual role in the initiator identity of N-formylmethionyl-tRNA by promoting its recognition by IF2 and preventing the misappropriation of this tRNA by the elongation apparatus. This is Methionyl-tRNA formyltransferase from Pseudomonas fluorescens (strain SBW25).